We begin with the raw amino-acid sequence, 599 residues long: DNA primase (599 aa).

A CHC2-type zinc finger spans residues 38 to 62 (CPFHQEKTPSFTVSDSKRFFYCFGC). The region spanning 250 to 332 (NYSILVEGYF…EKKISFIRLP (83 aa)) is the Toprim domain. Mg(2+)-binding residues include E256, D300, and D302.

This sequence belongs to the DnaG primase family. In terms of assembly, monomer. Interacts with DnaB. Zn(2+) is required as a cofactor. Requires Mg(2+) as cofactor.

The enzyme catalyses ssDNA + n NTP = ssDNA/pppN(pN)n-1 hybrid + (n-1) diphosphate.. In terms of biological role, RNA polymerase that catalyzes the synthesis of short RNA molecules used as primers for DNA polymerase during DNA replication. In Rickettsia bellii (strain RML369-C), this protein is DNA primase.